The sequence spans 263 residues: Acetylglutamate kinase (263 aa).

Substrate is bound by residues 48-49 (GG), Arg-70, and Asn-162.

It belongs to the acetylglutamate kinase family. ArgB subfamily.

It is found in the cytoplasm. It catalyses the reaction N-acetyl-L-glutamate + ATP = N-acetyl-L-glutamyl 5-phosphate + ADP. The protein operates within amino-acid biosynthesis; L-arginine biosynthesis; N(2)-acetyl-L-ornithine from L-glutamate: step 2/4. Its function is as follows. Catalyzes the ATP-dependent phosphorylation of N-acetyl-L-glutamate. This is Acetylglutamate kinase from Vibrio vulnificus (strain CMCP6).